Reading from the N-terminus, the 438-residue chain is GTPase Der (438 aa).

EngA-type G domains are found at residues 3–168 (PLIA…PCPE) and 179–354 (IKLA…INRR). Residues 9–16 (GRPNVGKS), 56–60 (DTGGY), 120–123 (NKVD), 185–192 (GRPNVGKS), 232–236 (DTAGL), and 297–300 (NKWD) contribute to the GTP site. The region spanning 355-438 (QKISTSNLNR…LPITMRFLRK (84 aa)) is the KH-like domain.

It belongs to the TRAFAC class TrmE-Era-EngA-EngB-Septin-like GTPase superfamily. EngA (Der) GTPase family. As to quaternary structure, associates with the 50S ribosomal subunit.

Functionally, GTPase that plays an essential role in the late steps of ribosome biogenesis. This chain is GTPase Der, found in Chlorobaculum parvum (strain DSM 263 / NCIMB 8327) (Chlorobium vibrioforme subsp. thiosulfatophilum).